We begin with the raw amino-acid sequence, 91 residues long: Small ribosomal subunit protein uS15 (91 aa).

The protein belongs to the universal ribosomal protein uS15 family. In terms of assembly, part of the 30S ribosomal subunit. Forms a bridge to the 50S subunit in the 70S ribosome, contacting the 23S rRNA.

In terms of biological role, one of the primary rRNA binding proteins, it binds directly to 16S rRNA where it helps nucleate assembly of the platform of the 30S subunit by binding and bridging several RNA helices of the 16S rRNA. Forms an intersubunit bridge (bridge B4) with the 23S rRNA of the 50S subunit in the ribosome. The protein is Small ribosomal subunit protein uS15 of Deinococcus geothermalis (strain DSM 11300 / CIP 105573 / AG-3a).